The chain runs to 123 residues: Large ribosomal subunit protein uL14 (123 aa).

The protein belongs to the universal ribosomal protein uL14 family. In terms of assembly, part of the 50S ribosomal subunit. Forms a cluster with proteins L3 and L19. In the 70S ribosome, L14 and L19 interact and together make contacts with the 16S rRNA in bridges B5 and B8.

In terms of biological role, binds to 23S rRNA. Forms part of two intersubunit bridges in the 70S ribosome. This chain is Large ribosomal subunit protein uL14, found in Erwinia tasmaniensis (strain DSM 17950 / CFBP 7177 / CIP 109463 / NCPPB 4357 / Et1/99).